The chain runs to 931 residues: Short transient receptor potential channel 6 (931 aa).

The segment covering 1 to 23 has biased composition (low complexity); the sequence is MSQSPAFGPRRGSSPRGAAGAAA. Residues 1-26 form a disordered region; sequence MSQSPAFGPRRGSSPRGAAGAAARRN. The Cytoplasmic segment spans residues 1–438; sequence MSQSPAFGPR…CSKMGKIMRG (438 aa). ANK repeat units lie at residues 97-126, 132-161, 163-189, and 218-247; these read IEEE…SLNV, MGQN…LSRV, DALL…FAEG, and HDVT…RIER. The chain crosses the membrane as a helical span at residues 439–459; it reads PFMKFVAHAASFTIFLGLLVM. Residues 460–487 are Extracellular-facing; that stretch reads NAADRFEGTKLLPNETSTDNAKQLFRMK. Asparagine 473 carries an N-linked (GlcNAc...) asparagine glycan. The helical transmembrane segment at 488 to 508 threads the bilayer; that stretch reads TSCFSWMEMLIISWVIGMIWA. Over 509 to 521 the chain is Cytoplasmic; that stretch reads ECKEIWTQGPKEY. The chain crosses the membrane as a helical span at residues 522-542; sequence LFELWNMLDFGMLAIFAASFI. Residues 543–592 are Extracellular-facing; sequence ARFMAFWHASKAQSIIDANDTLKDLTKVTLGDNVKYYNLARIKWDPSDPQ. Asparagine 561 carries N-linked (GlcNAc...) asparagine glycosylation. A helical transmembrane segment spans residues 593 to 613; the sequence is IISEGLYAIAVVLSFSRIAYI. The Cytoplasmic portion of the chain corresponds to 614-636; the sequence is LPANESFGPLQISLGRTVKDIFK. Residues 637 to 657 traverse the membrane as a helical segment; sequence FMVIFIMVFVAFMIGMFNLYS. Residues 658-706 lie on the Extracellular side of the membrane; sequence YYIGAKQNEAFTTVEESFKTLFWAIFGLSEVKSVVINYNHKFIENIGYV. A helical transmembrane segment spans residues 707–727; sequence LYGVYNVTMVIVLLNMLIAMI. The Cytoplasmic portion of the chain corresponds to 728–931; the sequence is NSSFQEIEDD…MEPNQEETNR (204 aa). Position 815 is a phosphoserine (serine 815).

The protein belongs to the transient receptor (TC 1.A.4) family. STrpC subfamily. TRPC6 sub-subfamily. As to quaternary structure, homodimer; forms channel complex. Interacts with MX1 and RNF24. Phosphorylated by FYN, leading to an increase of TRPC6 channel activity. Expressed primarily in placenta, lung, spleen, ovary and small intestine. Expressed in podocytes and is a component of the glomerular slit diaphragm.

Its subcellular location is the cell membrane. It catalyses the reaction Ca(2+)(in) = Ca(2+)(out). Activated by diacylglycerol (DAG) in a membrane-delimited fashion, independently of protein kinase C. Functionally, forms a receptor-activated non-selective calcium permeant cation channel. Probably is operated by a phosphatidylinositol second messenger system activated by receptor tyrosine kinases or G-protein coupled receptors. Activated by diacylglycerol (DAG) in a membrane-delimited fashion, independently of protein kinase C. Seems not to be activated by intracellular calcium store depletion. The polypeptide is Short transient receptor potential channel 6 (Homo sapiens (Human)).